A 449-amino-acid polypeptide reads, in one-letter code: C4-dicarboxylate transport protein (449 aa).

The segment at 1–20 is disordered; sequence MSALTESFGPVPSAKSKPPA. Residues 10–20 are compositionally biased toward low complexity; the sequence is PVPSAKSKPPA. 8 helical membrane passes run 28–48, 66–86, 101–121, 167–187, 205–225, 241–261, 326–346, and 370–390; these read LLYL…WLSP, LIKM…IAHI, LYFE…GNVV, GDIL…MTLG, FGVI…AMAF, LIAV…GLIA, IYMT…LTWT, and FITL…GMAI.

The protein belongs to the dicarboxylate/amino acid:cation symporter (DAACS) (TC 2.A.23) family.

It localises to the cell inner membrane. Functionally, responsible for the transport of dicarboxylates such as succinate, fumarate, and malate from the periplasm across the membrane. This is C4-dicarboxylate transport protein from Rhodopseudomonas palustris (strain BisB18).